The primary structure comprises 589 residues: Zinc finger protein 703 (589 aa).

Residues 102 to 315 (SQIGKPDPPP…GTGHIAPVSP (214 aa)) are disordered. Residues 113–122 (SKLGSLSSSS) are compositionally biased toward low complexity. The segment covering 137–148 (SGEHQNLDDKSS) has biased composition (basic and acidic residues). The span at 179-188 (NGSSSSVTCT) shows a compositional bias: polar residues. Residues 196-206 (SPRASSPQQTS) are compositionally biased toward low complexity. Positions 214 to 230 (QSQSPLSQKTAHLQTTH) are enriched in polar residues. The span at 237–250 (GSDPGNDSSSSGSD) shows a compositional bias: low complexity. Residues 251–262 (RNGKKDSDHNKS) show a composition bias toward basic and acidic residues. Residues 272 to 299 (SSHARASVNSSSASSSSSPQPDSKTDSQ) show a composition bias toward low complexity. The interval 408 to 460 (VHDPSSALKSGFPLMYPTHHLHSLHPSSLSSSATSSLSHPLYTYGFMLPNETL) is required for interaction with Groucho and hdac2 plays an important role in repression of transcription. A C2H2-type zinc finger spans residues 462 to 490 (HACNWVSVGGPCDKRFATSEELLAHLRTH). A required for self-association and nuclear localization region spans residues 498–589 (GKLLSGYPSS…LGSASALGYQ (92 aa)).

This sequence belongs to the Elbow/Noc family. In terms of assembly, self-associates. Interacts with nlz2. May interact with Groucho corepressor proteins.

Its subcellular location is the nucleus. The protein resides in the cytoplasm. Its function is as follows. Transcriptional corepressor which does not bind directly to DNA and may regulate transcription through recruitment of histone deacetylases to gene promoters. Required for segmental gene expression during hindbrain development. May regulate cell adhesion, migration and proliferation. This chain is Zinc finger protein 703 (znf703), found in Danio rerio (Zebrafish).